The following is a 159-amino-acid chain: NADH-quinone oxidoreductase subunit I (159 aa).

4Fe-4S ferredoxin-type domains lie at arginine 51–aspartate 80 and threonine 90–asparagine 119. [4Fe-4S] cluster is bound by residues cysteine 60, cysteine 63, cysteine 66, cysteine 70, cysteine 99, cysteine 102, cysteine 105, and cysteine 109.

It belongs to the complex I 23 kDa subunit family. As to quaternary structure, NDH-1 is composed of 14 different subunits. Subunits NuoA, H, J, K, L, M, N constitute the membrane sector of the complex. Requires [4Fe-4S] cluster as cofactor.

The protein resides in the cell membrane. The enzyme catalyses a quinone + NADH + 5 H(+)(in) = a quinol + NAD(+) + 4 H(+)(out). Functionally, NDH-1 shuttles electrons from NADH, via FMN and iron-sulfur (Fe-S) centers, to quinones in the respiratory chain. The immediate electron acceptor for the enzyme in this species is believed to be ubiquinone. Couples the redox reaction to proton translocation (for every two electrons transferred, four hydrogen ions are translocated across the cytoplasmic membrane), and thus conserves the redox energy in a proton gradient. This Rickettsia africae (strain ESF-5) protein is NADH-quinone oxidoreductase subunit I.